The sequence spans 60 residues: Large ribosomal subunit protein bL32 (60 aa).

Belongs to the bacterial ribosomal protein bL32 family.

This chain is Large ribosomal subunit protein bL32, found in Clostridium acetobutylicum (strain ATCC 824 / DSM 792 / JCM 1419 / IAM 19013 / LMG 5710 / NBRC 13948 / NRRL B-527 / VKM B-1787 / 2291 / W).